Consider the following 362-residue polypeptide: MNTFGTRLKFTSFGESHGVAVGCIIDGMPAGVKFDEEFLQNELDKRKGGSKFATPRKESDKAQVLSGVFEGYTTGHPIAIVVFNENAHSKDYDNLKDLFRPAHADFTYFYKYGIRDHRGGGRSSARESVARVAGGAVAAMLLREFDICVQSGVFGVGTFVSNLKEEEFDFEFAKKSEIFCLDPKLESDFKNEILNARNSKDSVGAAVFTKVSGMLIGLGEVLYDKLDSKLAHALMGINAVKAVEIGEGINASKMRGSCNNDALKDGKFLSNHSGGILGGISNGENLILKTYFKPTPSIFAKQESIDKFGNNLKFELKGRHDPCVGVRGSVVASAMVRLVLADCLLLNASANLNNLKNAYGLK.

Arginine 46 serves as a coordination point for NADP(+). FMN-binding positions include 122-124 (RSS), 238-239 (NA), glycine 278, 293-297 (KPTPS), and arginine 319.

It belongs to the chorismate synthase family. As to quaternary structure, homotetramer. It depends on FMNH2 as a cofactor.

It catalyses the reaction 5-O-(1-carboxyvinyl)-3-phosphoshikimate = chorismate + phosphate. It functions in the pathway metabolic intermediate biosynthesis; chorismate biosynthesis; chorismate from D-erythrose 4-phosphate and phosphoenolpyruvate: step 7/7. Its function is as follows. Catalyzes the anti-1,4-elimination of the C-3 phosphate and the C-6 proR hydrogen from 5-enolpyruvylshikimate-3-phosphate (EPSP) to yield chorismate, which is the branch point compound that serves as the starting substrate for the three terminal pathways of aromatic amino acid biosynthesis. This reaction introduces a second double bond into the aromatic ring system. In Campylobacter jejuni subsp. jejuni serotype O:2 (strain ATCC 700819 / NCTC 11168), this protein is Chorismate synthase.